The chain runs to 560 residues: Transcription termination factor 5, mitochondrial (560 aa).

The N-terminal 23 residues, Met1–Met23, are a transit peptide targeting the mitochondrion. The segment at Met23–Glu47 is disordered.

It belongs to the mTERF family. Probably binds to the mTTF-DNA complex.

Its subcellular location is the mitochondrion. Functionally, binds promoter DNA and regulates initiation of transcription. Regulates mitochondrial replication and transcription. Required for normal topology and maintenance of mitochondrial DNA (mtDNA) levels. Regulates mtDNA replication by re-activating replication after replication pausing. Likely to regulate replication pausing by coordinating with the mitochondrial termination factor mTTF which promotes replication pausing. Their function in replication pausing prevents unregulated replication that may occur for example by collisions between the machineries of DNA replication and transcription during mtDNA synthesis. This ensures the incorporation of RNA transcripts into replication intermediates at the replication fork and allows for proper fork progression. Possibly functions downstream of Dref which activates genes involved in mtDNA replication and maintenance. The sequence is that of Transcription termination factor 5, mitochondrial from Drosophila melanogaster (Fruit fly).